The chain runs to 380 residues: Tryptophan 2,3-dioxygenase (380 aa).

Residues F57–H61 and R128 contribute to the substrate site. H313 lines the heme pocket. T328 lines the substrate pocket.

Belongs to the tryptophan 2,3-dioxygenase family. In terms of assembly, homotetramer. Dimer of dimers. Heme is required as a cofactor.

The catalysed reaction is L-tryptophan + O2 = N-formyl-L-kynurenine. It participates in amino-acid degradation; L-tryptophan degradation via kynurenine pathway; L-kynurenine from L-tryptophan: step 1/2. Its pathway is pigment biosynthesis; ommochrome biosynthesis. Functionally, heme-dependent dioxygenase that catalyzes the oxidative cleavage of the L-tryptophan (L-Trp) pyrrole ring and converts L-tryptophan to N-formyl-L-kynurenine. Catalyzes the oxidative cleavage of the indole moiety. The protein is Tryptophan 2,3-dioxygenase of Drosophila virilis (Fruit fly).